The chain runs to 459 residues: Argininosuccinate lyase (459 aa).

The protein belongs to the lyase 1 family. Argininosuccinate lyase subfamily.

It is found in the cytoplasm. The catalysed reaction is 2-(N(omega)-L-arginino)succinate = fumarate + L-arginine. It participates in amino-acid biosynthesis; L-arginine biosynthesis; L-arginine from L-ornithine and carbamoyl phosphate: step 3/3. The sequence is that of Argininosuccinate lyase from Prochlorococcus marinus (strain MIT 9301).